The chain runs to 124 residues: Small ribosomal subunit protein uS12 (124 aa).

Asp-89 bears the 3-methylthioaspartic acid mark.

It belongs to the universal ribosomal protein uS12 family. In terms of assembly, part of the 30S ribosomal subunit. Contacts proteins S8 and S17. May interact with IF1 in the 30S initiation complex.

With S4 and S5 plays an important role in translational accuracy. Its function is as follows. Interacts with and stabilizes bases of the 16S rRNA that are involved in tRNA selection in the A site and with the mRNA backbone. Located at the interface of the 30S and 50S subunits, it traverses the body of the 30S subunit contacting proteins on the other side and probably holding the rRNA structure together. The combined cluster of proteins S8, S12 and S17 appears to hold together the shoulder and platform of the 30S subunit. This is Small ribosomal subunit protein uS12 (rpsL) from Mannheimia haemolytica (Pasteurella haemolytica).